Consider the following 923-residue polypeptide: Periodic tryptophan protein 2 (923 aa).

WD repeat units lie at residues 12–52 (GTVY…TFEY), 53–93 (EHRK…LHHF), 94–132 (NFKE…KDRQ), 144–183 (GHFQ…KNLA), and 189–228 (GHRD…SDDD). Ser225 and Ser232 each carry phosphoserine. WD repeat units lie at residues 258–297 (ANQA…LIQQ), 300–340 (MGQN…YILK), 343–382 (GHFD…CLAT), 385–424 (EHTS…NFRT), 428–470 (TERI…DALS), 471–510 (GHEG…QQVE), 513–552 (EVYS…QVGN), and 575–614 (ERSK…LLKR). Residues Ser651 and Ser664 each carry the phosphoserine modification. Positions 653-674 (LEDRIDNSLPGSQRGGDLSTRK) are disordered. Residues 676–714 (RPEVRVTSVQFSPTANAFAAASTEGLLIYSTNDTILFDP) form a WD 14 repeat. Composition is skewed to acidic residues over residues 869-893 (KDDA…DEEG) and 911-923 (DSSD…KELP). The tract at residues 869 to 923 (KDDADEDNEENEENDVVMESDDEEGWIGFNGKDNKLPLSNENDSSDEEENEKELP) is disordered. Residues Ser912 and Ser913 each carry the phosphoserine modification.

The protein belongs to the WD repeat PWP2 family. In terms of assembly, interacts with snoRNA U3. Interacts with MPP10. Component of the ribosomal small subunit (SSU) processome composed of at least 40 protein subunits and snoRNA U3.

Its subcellular location is the nucleus. It localises to the nucleolus. Functionally, required for bud-site selection and cell separation. Also involved in nucleolar processing of pre-18S ribosomal RNA. This chain is Periodic tryptophan protein 2 (PWP2), found in Saccharomyces cerevisiae (strain ATCC 204508 / S288c) (Baker's yeast).